Reading from the N-terminus, the 761-residue chain is Complement factor B (761 aa).

The N-terminal stretch at 1 to 25 is a signal peptide; it reads MGIGHNPRLCLVPLILGLLCGGVGM. Sushi domains lie at 35-100, 101-160, and 163-220; these read SPCS…ECKA, IRCP…ICDD, and TYCP…SCQD. Intrachain disulfides connect cysteine 37-cysteine 76, cysteine 62-cysteine 98, cysteine 103-cysteine 145, cysteine 131-cysteine 158, cysteine 165-cysteine 205, and cysteine 191-cysteine 218. N-linked (GlcNAc...) asparagine glycosylation is found at asparagine 122 and asparagine 142. In terms of domain architecture, VWFA spans 270-469; sequence NIYLVLDGSD…NLEDVFVQML (200 aa). Positions 278 and 280 each coordinate Mg(2+). Asparagine 285 carries an N-linked (GlcNAc...) asparagine glycan. Residue threonine 353 coordinates Mg(2+). A glycan (N-linked (GlcNAc...) asparagine) is linked at asparagine 378. The Peptidase S1 domain maps to 477–754; sequence LCGMVWEHKD…VLPWLKEKLQ (278 aa). Cystine bridges form between cysteine 478-cysteine 596, cysteine 511-cysteine 527, cysteine 599-cysteine 615, cysteine 656-cysteine 682, and cysteine 695-cysteine 725. Active-site charge relay system residues include histidine 526 and aspartate 576. Residue serine 699 is the Charge relay system of the active site.

The protein belongs to the peptidase S1 family. In terms of assembly, monomer. Interacts with complement C3b; this interaction is dependent on the presence of Mg(2+). Catalytic component of the C3 convertase of the alternative complement pathway, also named C3bBb, composed of complement factor B Bb and complement C3b. Catalytic component of the C5 convertase of the alternative complement pathway, also named C3bBb3b, composed of complement factor B Bb and additional molecules of complement C3b. Interacts to CFP; this interaction contributes to the stabilization of the active C3-convertase enzyme complex. The cofactor is Mg(2+). It depends on Mn(2+) as a cofactor. In terms of processing, cleaved by CFD following activation of the alternative complement system, generating Ba and Bb chains. Cleavage and activation takes place when CFB is already associated with complement C3b.

The protein resides in the secreted. It localises to the cell surface. It carries out the reaction Cleavage of Arg-|-Ser bond in complement component C3 alpha-chain to yield C3a and C3b, and Arg-|-Xaa bond in complement component C5 alpha-chain to yield C5a and C5b.. In terms of biological role, precursor of the catalytic component of the C3 and C5 convertase complexes of the alternative pathway of the complement system, a cascade of proteins that leads to phagocytosis and breakdown of pathogens and signaling that strengthens the adaptive immune system. The alternative complement pathway acts as an amplification loop that enhances other complement pathways (classical, lectin and GZMK) by promoting formation of additional C3 and C5 convertases. CFB is cleaved and activated by CFD to generate Ba and Bb chains; Bb chain constituting the catalytic component of the C3 and C5 convertases. Functionally, serine protease component of the complement C3 and C5 convertase complexes of the alternative complement pathway. Following cleavage and activation by factor D (CFD), forms the C3 convertase together with complement C3b. As part of the C3 convertase, cleaves and activates C3 into C3a anaphylatoxin and C3b opsonin, the next components of the complement pathways. When an additional complement C3b molecule binds to the C3 convertase, forms the C5 convertase, which cleaves and activates C5 into C5a anaphylatoxin and C5b component of the membrane attack complex. Involved in proliferation and differentiation of preactivated B-lymphocytes, rapid spreading of peripheral blood monocytes, stimulation of lymphocyte blastogenesis and lysis of erythrocytes. This chain is Complement factor B (CFB), found in Bos taurus (Bovine).